Reading from the N-terminus, the 185-residue chain is MANDKNEDQKEEETKTLQEKYDELLEELDSKNKELAKINEDLEKQKEETQEYISLSQRLQADFENFKKINEKKSKDIIKFANEPLIKNILDSYEDLERALENSKTEKELRDGVELIYSKIKDVLTKEGLEEIPAKGEKFDPFKHEALMVANDENVENGYIIDELMKGYTLKGKVIKYSKVRVCKK.

This sequence belongs to the GrpE family. As to quaternary structure, homodimer.

The protein localises to the cytoplasm. In terms of biological role, participates actively in the response to hyperosmotic and heat shock by preventing the aggregation of stress-denatured proteins, in association with DnaK and GrpE. It is the nucleotide exchange factor for DnaK and may function as a thermosensor. Unfolded proteins bind initially to DnaJ; upon interaction with the DnaJ-bound protein, DnaK hydrolyzes its bound ATP, resulting in the formation of a stable complex. GrpE releases ADP from DnaK; ATP binding to DnaK triggers the release of the substrate protein, thus completing the reaction cycle. Several rounds of ATP-dependent interactions between DnaJ, DnaK and GrpE are required for fully efficient folding. The sequence is that of Protein GrpE from Methanobrevibacter smithii (strain ATCC 35061 / DSM 861 / OCM 144 / PS).